Reading from the N-terminus, the 1159-residue chain is RNA-directed RNA polymerase (1159 aa).

The RdRp catalytic domain occupies leucine 545–glutamate 727.

This sequence belongs to the reoviridae RNA-directed RNA polymerase family. Interacts with VP3 (Potential). Interacts with VP2 (Potential). Interacts with NSP5; this interaction is probably necessary for the formation of functional virus factories.

It localises to the virion. It carries out the reaction RNA(n) + a ribonucleoside 5'-triphosphate = RNA(n+1) + diphosphate. In terms of biological role, RNA-directed RNA polymerase that is involved in both transcription and genome replication. Together with VP3 capping enzyme, forms an enzyme complex positioned near the channels situated at each of the five-fold vertices of the core. Following infection, the outermost layer of the virus is lost, leaving a double-layered particle (DLP) made up of the core and VP6 shell. VP1 then catalyzes the transcription of fully conservative plus-strand genomic RNAs that are extruded through the DLP's channels into the cytoplasm where they function as mRNAs for translation of viral proteins. One copy of each of the viral (+)RNAs is also recruited during core assembly, together with newly synthesized polymerase complexes and VP2. The polymerase of these novo-formed particles catalyzes the synthesis of complementary minus-strands leading to dsDNA formation. To do so, the polymerase specifically recognizes conserved 3' sequence(s) in plus-strand RNA templates. Once dsRNA synthesis is complete, the polymerase switches to the transcriptional mode, thus providing secondary transcription. This chain is RNA-directed RNA polymerase, found in Homo sapiens (Human).